A 183-amino-acid chain; its full sequence is MNNIVKIPQIITILSEHSSEHKFGFNSDIFEANVINILLLLFGLIYVLKQFLGSSLNARQIKVLAAIQESEERLEQASARLSESEKQLAQTQIIIDQIKKEAQLTAGKVRSSILAQGQLDIERLAITGKSNIETAEKQIRRQIQQQITFLALKRVTLQLENQMSSEMQLRIIDNNIAKLGDQL.

Residues 28–48 (DIFEANVINILLLLFGLIYVL) traverse the membrane as a helical segment.

The protein belongs to the ATPase B chain family. F-type ATPases have 2 components, F(1) - the catalytic core - and F(0) - the membrane proton channel. F(1) has five subunits: alpha(3), beta(3), gamma(1), delta(1), epsilon(1). F(0) has four main subunits: a(1), b(1), b'(1) and c(10-14). The alpha and beta chains form an alternating ring which encloses part of the gamma chain. F(1) is attached to F(0) by a central stalk formed by the gamma and epsilon chains, while a peripheral stalk is formed by the delta, b and b' chains.

It is found in the plastid. It localises to the chloroplast thylakoid membrane. Its function is as follows. F(1)F(0) ATP synthase produces ATP from ADP in the presence of a proton or sodium gradient. F-type ATPases consist of two structural domains, F(1) containing the extramembraneous catalytic core and F(0) containing the membrane proton channel, linked together by a central stalk and a peripheral stalk. During catalysis, ATP synthesis in the catalytic domain of F(1) is coupled via a rotary mechanism of the central stalk subunits to proton translocation. Component of the F(0) channel, it forms part of the peripheral stalk, linking F(1) to F(0). The chain is ATP synthase subunit b, chloroplastic from Pyropia yezoensis (Susabi-nori).